Consider the following 509-residue polypeptide: 2,3-bisphosphoglycerate-independent phosphoglycerate mutase (509 aa).

Mn(2+) is bound by residues Asp14 and Ser64. Ser64 acts as the Phosphoserine intermediate in catalysis. Substrate contacts are provided by residues His125, 155–156 (RD), Arg187, Arg193, 259–262 (RADR), and Lys332. The Mn(2+) site is built by Asp399, His403, Asp440, His441, and His459.

It belongs to the BPG-independent phosphoglycerate mutase family. In terms of assembly, monomer. Mn(2+) serves as cofactor.

It carries out the reaction (2R)-2-phosphoglycerate = (2R)-3-phosphoglycerate. It functions in the pathway carbohydrate degradation; glycolysis; pyruvate from D-glyceraldehyde 3-phosphate: step 3/5. In terms of biological role, catalyzes the interconversion of 2-phosphoglycerate and 3-phosphoglycerate. This Aeromonas salmonicida (strain A449) protein is 2,3-bisphosphoglycerate-independent phosphoglycerate mutase.